Reading from the N-terminus, the 135-residue chain is FK506-binding protein 2 (135 aa).

Positions 1–20 (MRVPIITTLLTLALTGLSQA) are cleaved as a signal peptide. The PPIase FKBP-type domain occupies 40–128 (GDTVKMHYRG…IFQTELLEIE (89 aa)). Residues 132 to 135 (KDEL) carry the Prevents secretion from ER motif.

Belongs to the FKBP-type PPIase family. FKBP2 subfamily.

It localises to the endoplasmic reticulum. The enzyme catalyses [protein]-peptidylproline (omega=180) = [protein]-peptidylproline (omega=0). With respect to regulation, inhibited by both FK506 and rapamycin. In terms of biological role, PPIases accelerate the folding of proteins. It catalyzes the cis-trans isomerization of proline imidic peptide bonds in oligopeptides. In Emericella nidulans (strain FGSC A4 / ATCC 38163 / CBS 112.46 / NRRL 194 / M139) (Aspergillus nidulans), this protein is FK506-binding protein 2 (fkbB).